The chain runs to 267 residues: Phosphatidylglycerol--prolipoprotein diacylglyceryl transferase (267 aa).

The next 3 helical transmembrane spans lie at 21–41, 60–80, and 95–115; these read VSLH…YWLG, LLFN…VFFY, and IWEG…AMLW. Arg-143 contributes to the a 1,2-diacyl-sn-glycero-3-phospho-(1'-sn-glycerol) binding site. Helical transmembrane passes span 203-223 and 240-260; these read GSVA…VEYF and GQLL…VAYY.

Belongs to the Lgt family.

The protein resides in the cell inner membrane. The enzyme catalyses L-cysteinyl-[prolipoprotein] + a 1,2-diacyl-sn-glycero-3-phospho-(1'-sn-glycerol) = an S-1,2-diacyl-sn-glyceryl-L-cysteinyl-[prolipoprotein] + sn-glycerol 1-phosphate + H(+). It participates in protein modification; lipoprotein biosynthesis (diacylglyceryl transfer). Functionally, catalyzes the transfer of the diacylglyceryl group from phosphatidylglycerol to the sulfhydryl group of the N-terminal cysteine of a prolipoprotein, the first step in the formation of mature lipoproteins. In Glaesserella parasuis serovar 5 (strain SH0165) (Haemophilus parasuis), this protein is Phosphatidylglycerol--prolipoprotein diacylglyceryl transferase.